We begin with the raw amino-acid sequence, 316 residues long: Biotin synthase (316 aa).

The 227-residue stretch at 42 to 268 (LCGESVDLCT…INPTAYIRMA (227 aa)) folds into the Radical SAM core domain. [4Fe-4S] cluster is bound by residues Cys60, Cys64, and Cys67. 4 residues coordinate [2Fe-2S] cluster: Ser104, Cys136, Cys196, and Arg266.

The protein belongs to the radical SAM superfamily. Biotin synthase family. In terms of assembly, homodimer. The cofactor is [4Fe-4S] cluster. Requires [2Fe-2S] cluster as cofactor.

It catalyses the reaction (4R,5S)-dethiobiotin + (sulfur carrier)-SH + 2 reduced [2Fe-2S]-[ferredoxin] + 2 S-adenosyl-L-methionine = (sulfur carrier)-H + biotin + 2 5'-deoxyadenosine + 2 L-methionine + 2 oxidized [2Fe-2S]-[ferredoxin]. Its pathway is cofactor biosynthesis; biotin biosynthesis; biotin from 7,8-diaminononanoate: step 2/2. Catalyzes the conversion of dethiobiotin (DTB) to biotin by the insertion of a sulfur atom into dethiobiotin via a radical-based mechanism. This Clostridium beijerinckii (strain ATCC 51743 / NCIMB 8052) (Clostridium acetobutylicum) protein is Biotin synthase.